Here is a 559-residue protein sequence, read N- to C-terminus: 2-succinyl-5-enolpyruvyl-6-hydroxy-3-cyclohexene-1-carboxylate synthase (559 aa).

This sequence belongs to the TPP enzyme family. MenD subfamily. As to quaternary structure, homodimer. The cofactor is Mg(2+). It depends on Mn(2+) as a cofactor. Thiamine diphosphate serves as cofactor.

It catalyses the reaction isochorismate + 2-oxoglutarate + H(+) = 5-enolpyruvoyl-6-hydroxy-2-succinyl-cyclohex-3-ene-1-carboxylate + CO2. It participates in quinol/quinone metabolism; 1,4-dihydroxy-2-naphthoate biosynthesis; 1,4-dihydroxy-2-naphthoate from chorismate: step 2/7. It functions in the pathway quinol/quinone metabolism; menaquinone biosynthesis. In terms of biological role, catalyzes the thiamine diphosphate-dependent decarboxylation of 2-oxoglutarate and the subsequent addition of the resulting succinic semialdehyde-thiamine pyrophosphate anion to isochorismate to yield 2-succinyl-5-enolpyruvyl-6-hydroxy-3-cyclohexene-1-carboxylate (SEPHCHC). The polypeptide is 2-succinyl-5-enolpyruvyl-6-hydroxy-3-cyclohexene-1-carboxylate synthase (Cytophaga hutchinsonii (strain ATCC 33406 / DSM 1761 / CIP 103989 / NBRC 15051 / NCIMB 9469 / D465)).